The following is a 96-amino-acid chain: Molybdopterin synthase sulfur carrier subunit (96 aa).

Position 96 is a 1-thioglycine; alternate (G96). At G96 the chain carries Glycyl adenylate; alternate.

The protein belongs to the MoaD family. MOCS2A subfamily. In terms of assembly, heterotetramer; composed of 2 small (MOCS2A) and 2 large (MOCS2B) subunits. Post-translationally, C-terminal thiocarboxylation occurs in 2 steps, it is first acyl-adenylated (-COAMP) via the hesA/moeB/thiF part of MOCS3, then thiocarboxylated (-COSH) via the rhodanese domain of MOCS3.

Its subcellular location is the cytoplasm. It functions in the pathway cofactor biosynthesis; molybdopterin biosynthesis. In terms of biological role, acts as a sulfur carrier required for molybdopterin biosynthesis. Component of the molybdopterin synthase complex that catalyzes the conversion of precursor Z into molybdopterin by mediating the incorporation of 2 sulfur atoms into precursor Z to generate a dithiolene group. In the complex, serves as sulfur donor by being thiocarboxylated (-COSH) at its C-terminus by MOCS3. After interaction with MOCS2B, the sulfur is then transferred to precursor Z to form molybdopterin. The chain is Molybdopterin synthase sulfur carrier subunit from Arabidopsis thaliana (Mouse-ear cress).